A 515-amino-acid polypeptide reads, in one-letter code: Microtubule-associated protein 70-4 (515 aa).

Coiled-coil stretches lie at residues 26–106 and 136–351; these read VVDE…ALSA and LESD…NTSA. Residues 208–410 are required for targeting to microtubules; that stretch reads LLEKSNRQQV…KQPGSETEAA (203 aa). The interval 340–515 is disordered; it reads DDMRNESSNT…VKSTKDSCEI (176 aa). A compositionally biased stretch (polar residues) spans 345–362; it reads ESSNTSASNKDNATSKQA. A compositionally biased stretch (low complexity) spans 364–374; sequence PKRSSSQPRRP. Basic and acidic residues-rich tracts occupy residues 409–425, 450–461, and 484–515; these read AAEKNRHAAAKRFDSPR, KVADDAGKENKE, and SEHEEAMDLRKLDEGKADDSDAVKSTKDSCEI.

This sequence belongs to the MAP70 family.

Its subcellular location is the cytoplasm. It is found in the cytoskeleton. Its function is as follows. Plant-specific protein that interact with microtubules. The sequence is that of Microtubule-associated protein 70-4 (MAP70.4) from Oryza sativa subsp. japonica (Rice).